We begin with the raw amino-acid sequence, 124 residues long: KESAAAKFERQHMDPSTSSASSSNYCNQMMQSRKMTQDRCKPVNTFVHESLADVQAVCFQKNVACKNGQSNCYQSNSAMHITDCRESGNSKYPNCVYKATQAEKHIIVACEGNPYVPVHFDASV.

A compositionally biased stretch (basic and acidic residues) spans 1 to 13 (KESAAAKFERQHM). Residues 1–24 (KESAAAKFERQHMDPSTSSASSSN) form a disordered region. The substrate site is built by lysine 7 and arginine 10. Histidine 12 serves as the catalytic Proton acceptor. 4 disulfide bridges follow: cysteine 26–cysteine 84, cysteine 40–cysteine 95, cysteine 58–cysteine 110, and cysteine 65–cysteine 72. Substrate is bound by residues 41-45 (KPVNT), lysine 66, and arginine 85. Residue histidine 119 is the Proton donor of the active site.

This sequence belongs to the pancreatic ribonuclease family. Monomer. Interacts with and forms tight 1:1 complexes with RNH1. Dimerization of two such complexes may occur. Interaction with RNH1 inhibits this protein. As to expression, pancreas.

It is found in the secreted. It carries out the reaction an [RNA] containing cytidine + H2O = an [RNA]-3'-cytidine-3'-phosphate + a 5'-hydroxy-ribonucleotide-3'-[RNA].. The catalysed reaction is an [RNA] containing uridine + H2O = an [RNA]-3'-uridine-3'-phosphate + a 5'-hydroxy-ribonucleotide-3'-[RNA].. In terms of biological role, endonuclease that catalyzes the cleavage of RNA on the 3' side of pyrimidine nucleotides. Acts on single-stranded and double-stranded RNA. The sequence is that of Ribonuclease pancreatic (RNASE1) from Cervus elaphus (Red deer).